Here is a 161-residue protein sequence, read N- to C-terminus: Allophycocyanin subunit alpha 1 (161 aa).

Asparagine 71 is subject to N4-methylasparagine. Cysteine 81 provides a ligand contact to (2R,3E)-phycocyanobilin.

The protein belongs to the phycobiliprotein family. In terms of assembly, heterohexamer of two alpha chains, one alpha-B chain and three beta chains. In terms of processing, contains one covalently linked phycocyanobilin chromophore. The chromophore is added by phycocyanobilin lyase CpcS 1.

The protein localises to the cellular thylakoid membrane. In terms of biological role, light-harvesting photosynthetic bile pigment-protein from the phycobiliprotein complex. Allophycocyanin has a maximum absorption at approximately 650 to 653 nanometers. This chain is Allophycocyanin subunit alpha 1 (apcA1), found in Nostoc sp. (strain PCC 7120 / SAG 25.82 / UTEX 2576).